The primary structure comprises 186 residues: ATP synthase subunit delta (186 aa).

Belongs to the ATPase delta chain family. In terms of assembly, F-type ATPases have 2 components, F(1) - the catalytic core - and F(0) - the membrane proton channel. F(1) has five subunits: alpha(3), beta(3), gamma(1), delta(1), epsilon(1). CF(0) has four main subunits: a(1), b(1), b'(1) and c(10-14). The alpha and beta chains form an alternating ring which encloses part of the gamma chain. F(1) is attached to F(0) by a central stalk formed by the gamma and epsilon chains, while a peripheral stalk is formed by the delta, b and b' chains.

It localises to the cell inner membrane. Functionally, f(1)F(0) ATP synthase produces ATP from ADP in the presence of a proton or sodium gradient. F-type ATPases consist of two structural domains, F(1) containing the extramembraneous catalytic core and F(0) containing the membrane proton channel, linked together by a central stalk and a peripheral stalk. During catalysis, ATP synthesis in the catalytic domain of F(1) is coupled via a rotary mechanism of the central stalk subunits to proton translocation. Its function is as follows. This protein is part of the stalk that links CF(0) to CF(1). It either transmits conformational changes from CF(0) to CF(1) or is implicated in proton conduction. The sequence is that of ATP synthase subunit delta from Rhodopseudomonas palustris (strain BisB5).